Reading from the N-terminus, the 276-residue chain is Ribosomal RNA small subunit methyltransferase I (276 aa).

It belongs to the methyltransferase superfamily. RsmI family.

Its subcellular location is the cytoplasm. The catalysed reaction is cytidine(1402) in 16S rRNA + S-adenosyl-L-methionine = 2'-O-methylcytidine(1402) in 16S rRNA + S-adenosyl-L-homocysteine + H(+). In terms of biological role, catalyzes the 2'-O-methylation of the ribose of cytidine 1402 (C1402) in 16S rRNA. The sequence is that of Ribosomal RNA small subunit methyltransferase I from Mycoplasma pneumoniae (strain ATCC 29342 / M129 / Subtype 1) (Mycoplasmoides pneumoniae).